Here is a 470-residue protein sequence, read N- to C-terminus: N amino acid transport system protein (470 aa).

Positions 1-11 (MDSQYETKKND) are enriched in basic and acidic residues. The tract at residues 1 to 21 (MDSQYETKKNDPNAIMPYPES) is disordered. Over 1-56 (MDSQYETKKNDPNAIMPYPESNDEHVGEVRGLGGGIMDKEPEAQEGHAKFHRLGWK) the chain is Extracellular. A run of 2 helical transmembrane segments spans residues 57 to 77 (RLTV…LPGA) and 78 to 98 (FATL…LICI). Over 99 to 131 (YTAHVIGQTKLKHPEIAHYADVGRVMFGRWGYE) the chain is Extracellular. Residues 132–152 (IISFMFVLQLIFIVGSHVLTG) form a helical membrane-spanning segment. Residues 153-168 (TIMWGTITDNGNGTCS) are Cytoplasmic-facing. 2 helical membrane passes run 169–189 (LVFG…PSFA) and 191–211 (VAIL…ITMI). Residues 212-236 (ATGIRSSHQEGGLAAVPWSCWPKED) lie on the Cytoplasmic side of the membrane. Residues 237-257 (LSLAEGFIAVSNIVFAYSFAM) form a helical membrane-spanning segment. Over 258 to 275 (CQFSFMDEMHTPSDYKKS) the chain is Extracellular. The helical transmembrane segment at 276 to 296 (IVALGLIEIFIYTVTGGVVYA) threads the bilayer. The Cytoplasmic segment spans residues 297–316 (FVGPEVQSPALLSAGPLLAK). Residues 317 to 337 (VAFGIALPVIFISGSINTVVV) traverse the membrane as a helical segment. Residues 338-357 (SRYLIERIWPNNVIRYVNTP) lie on the Extracellular side of the membrane. Residues 358–378 (AGWMVWLGFDFGITLIAWVIA) traverse the membrane as a helical segment. At 379–386 (EAIPFFSD) the chain is on the cytoplasmic side. A helical transmembrane segment spans residues 387 to 407 (LLAICSALFISGFSFYFPALM). The Extracellular segment spans residues 408 to 427 (YFKITRNDAKSQGKKYFLDA). The chain crosses the membrane as a helical span at residues 428 to 448 (LNMLCFVIGMGILGIGTYAAI). At 449–470 (QDIMDRYDHGKVSKPYSCAPLA) the chain is on the cytoplasmic side.

Belongs to the amino acid/polyamine transporter 2 family.

It localises to the membrane. In terms of biological role, required for the transport of neutral aliphatic and aromatic amino acids via the N system. The protein is N amino acid transport system protein (mtr) of Neurospora crassa (strain ATCC 24698 / 74-OR23-1A / CBS 708.71 / DSM 1257 / FGSC 987).